The primary structure comprises 310 residues: Ribosomal protein uL3 glutamine methyltransferase (310 aa).

It belongs to the protein N5-glutamine methyltransferase family. PrmB subfamily.

It carries out the reaction L-glutaminyl-[ribosomal protein uL3] + S-adenosyl-L-methionine = N(5)-methyl-L-glutaminyl-[ribosomal protein uL3] + S-adenosyl-L-homocysteine + H(+). Methylates large ribosomal subunit protein uL3 on a specific glutamine residue. In Aliivibrio fischeri (strain ATCC 700601 / ES114) (Vibrio fischeri), this protein is Ribosomal protein uL3 glutamine methyltransferase.